The primary structure comprises 215 residues: Ribose-5-phosphate isomerase A (215 aa).

Substrate is bound by residues 26-29 (TGST), 79-82 (DGAD), and 92-95 (KGGG). Glutamate 101 serves as the catalytic Proton acceptor. Lysine 119 provides a ligand contact to substrate.

Belongs to the ribose 5-phosphate isomerase family. Homodimer.

The enzyme catalyses aldehydo-D-ribose 5-phosphate = D-ribulose 5-phosphate. It participates in carbohydrate degradation; pentose phosphate pathway; D-ribose 5-phosphate from D-ribulose 5-phosphate (non-oxidative stage): step 1/1. In terms of biological role, catalyzes the reversible conversion of ribose-5-phosphate to ribulose 5-phosphate. The protein is Ribose-5-phosphate isomerase A of Stenotrophomonas maltophilia (strain R551-3).